The following is a 328-amino-acid chain: DNA-directed RNA polymerase subunit alpha (328 aa).

The segment at 1-232 is alpha N-terminal domain (alpha-NTD); the sequence is MHNSLAELIK…QHLAILVDLK (232 aa). Residues 246-328 are alpha C-terminal domain (alpha-CTD); sequence FDPLLLHPVD…PPEGLKKLNQ (83 aa).

This sequence belongs to the RNA polymerase alpha chain family. As to quaternary structure, homodimer. The RNAP catalytic core consists of 2 alpha, 1 beta, 1 beta' and 1 omega subunit. When a sigma factor is associated with the core the holoenzyme is formed, which can initiate transcription.

The enzyme catalyses RNA(n) + a ribonucleoside 5'-triphosphate = RNA(n+1) + diphosphate. Functionally, DNA-dependent RNA polymerase catalyzes the transcription of DNA into RNA using the four ribonucleoside triphosphates as substrates. This chain is DNA-directed RNA polymerase subunit alpha, found in Methylococcus capsulatus (strain ATCC 33009 / NCIMB 11132 / Bath).